The chain runs to 226 residues: Transcriptional regulatory protein PcoR (226 aa).

A Response regulatory domain is found at 3–117 (RILIVEDEQK…ELVARVRTLL (115 aa)). Asp52 carries the post-translational modification 4-aspartylphosphate. The ompR/PhoB-type DNA-binding region spans 125–223 (ATVCTIADMT…VRGAGYVLEI (99 aa)).

Phosphorylated by PcoS.

The protein resides in the cytoplasm. In terms of biological role, probable member of a two-component regulatory system PcoS/PcoR. May be involved in the activation of copper resistance gene operon pcoABCD by binding to a specific site on the cop operon promoter (copper box). This Escherichia coli protein is Transcriptional regulatory protein PcoR (pcoR).